A 190-amino-acid chain; its full sequence is LOB domain-containing protein 1 (190 aa).

The segment covering Met-1–Thr-11 has biased composition (polar residues). The segment at Met-1–Pro-27 is disordered. The region spanning Ser-32–Met-133 is the LOB domain.

This sequence belongs to the LOB domain-containing protein family. In terms of tissue distribution, expressed in young shoots, roots, stems, leaves and flowers.

This Arabidopsis thaliana (Mouse-ear cress) protein is LOB domain-containing protein 1 (LBD1).